Consider the following 282-residue polypeptide: uncharacterized protein (282 aa).

Residues 5 to 140 (DELIKLHEEH…SFQPYTKKLD (136 aa)) enclose the N-acetyltransferase domain.

Belongs to the acetyltransferase family.

This is an uncharacterized protein from Bacillus subtilis (strain 168).